Here is a 383-residue protein sequence, read N- to C-terminus: DNA dC-&gt;dU-editing enzyme APOBEC-3G (383 aa).

An essential for cytoplasmic localization region spans residues 1–60 (MKPQFRNTVERMYRDTFFYNFNNRPILSRRNTVWLCYEVKTRGPSMPTWDAKIFRGQVYS). CMP/dCMP-type deaminase domains are found at residues 29 to 138 (RRNT…LRVL) and 214 to 327 (GQHE…LRTL). Thr32 carries the phosphothreonine; by PKA modification. Positions 65, 97, and 100 each coordinate Zn(2+). The interval 209–335 (KPWVSGQHET…TLHRDGAKIA (127 aa)) is necessary for homooligomerization. An interaction with DNA region spans residues 213–215 (SGQ). Position 218 is a phosphothreonine; by PKA and CAMK2 (Thr218). His257 contacts Zn(2+). Catalysis depends on Glu259, which acts as the Proton donor. Zn(2+) is bound by residues Cys287 and Cys290. The tract at residues 312 to 319 (RIYDDQGR) is interaction with DNA.

Belongs to the cytidine and deoxycytidylate deaminase family. Homodimer. Requires Zn(2+) as cofactor.

It is found in the cytoplasm. The protein resides in the nucleus. Its subcellular location is the P-body. The catalysed reaction is a 2'-deoxycytidine in single-stranded DNA + H2O + H(+) = a 2'-deoxyuridine in single-stranded DNA + NH4(+). In terms of biological role, DNA deaminase (cytidine deaminase) which acts as an inhibitor of retrovirus replication and retrotransposon mobility. After the penetration of retroviral nucleocapsids into target cells of infection and the initiation of reverse transcription, it can induce the conversion of cytosine to uracil in the minus-sense single-strand viral DNA, leading to G-to-A hypermutations in the subsequent plus-strand viral DNA. The resultant detrimental levels of mutations in the proviral genome, along with a deamination-independent mechanism that works prior to the proviral integration, together exert efficient antiretroviral effects in infected target cells. Selectively targets single-stranded DNA and does not deaminate double-stranded DNA or single- or double-stranded RNA. The polypeptide is DNA dC-&gt;dU-editing enzyme APOBEC-3G (APOBEC3G) (Papio anubis (Olive baboon)).